Reading from the N-terminus, the 209-residue chain is Uracil phosphoribosyltransferase (209 aa).

5-phospho-alpha-D-ribose 1-diphosphate-binding positions include R79, R104, and 131–139 (DPMLATGVS). Uracil is bound by residues I194 and 199 to 201 (GDA). D200 contributes to the 5-phospho-alpha-D-ribose 1-diphosphate binding site.

It belongs to the UPRTase family. It depends on Mg(2+) as a cofactor.

The enzyme catalyses UMP + diphosphate = 5-phospho-alpha-D-ribose 1-diphosphate + uracil. It functions in the pathway pyrimidine metabolism; UMP biosynthesis via salvage pathway; UMP from uracil: step 1/1. With respect to regulation, allosterically activated by GTP. Catalyzes the conversion of uracil and 5-phospho-alpha-D-ribose 1-diphosphate (PRPP) to UMP and diphosphate. The polypeptide is Uracil phosphoribosyltransferase (Thermotoga petrophila (strain ATCC BAA-488 / DSM 13995 / JCM 10881 / RKU-1)).